The chain runs to 158 residues: Snaclec coagulation factor X-activating enzyme light chain 2 (158 aa).

Residues 1–24 (MGRFISVSFGLLVVFLSLSGTGAG) form the signal peptide. 3 disulfide bridges follow: Cys-27–Cys-38, Cys-55–Cys-152, and Cys-127–Cys-144. In terms of domain architecture, C-type lectin spans 34–153 (YRYFCYRVFK…CEERYLFVCK (120 aa)). An N-linked (GlcNAc...) (complex) asparagine glycan is attached at Asn-82.

It belongs to the snaclec family. In terms of assembly, heterotrimer; disulfide-linked. The heterotrimer consists of 1 heavy chain (a metalloproteinase) and 2 light chains: LC1 and LC2. Post-translationally, N-glycosylated; probably required for conformation. Removal of easily accessible sugars does not change its functional capacity, but removal of the core sugars with N-glycanase causes a virtually complete loss of enzyme activity, apparently as a result of major conformational changes in the molecule. Not O-glycosylated. As to expression, expressed by the venom gland.

It localises to the secreted. In terms of biological role, regulatory subunit of the blood coagulation factor X- and IX-activating enzyme. The enzyme activates coagulation factor X (F10) by cleaving the Arg-Ile bond and is also able to activate coagulation factor IX (F9) and protein S (PROS1) by specific cleavage of Arg-Ile and Arg-Val bonds. May serve as an exosite by which the enzyme recognizes and binds to the Gla domain of factor X (F10) and factor IX (F9) in a calcium-dependent manner. The sequence is that of Snaclec coagulation factor X-activating enzyme light chain 2 (LC2) from Daboia siamensis (Eastern Russel's viper).